Reading from the N-terminus, the 692-residue chain is MRPVRMKKLKAVILDEKIDNVVRSLHEEGIVELCDLSEKLEDLEWKTLLSPSSSADYVRNVTSLMIKAGRILDMFSSVSQKETSIKDILNPKPVEKKKVSFNSYQEVIDYAEKVLNEISKEVDGPAERLSELDNKKSKLLQLKEQISYLKGLEFDLKYLGSGEYVFIGAGSVPKEKLGELKAELDKVADGYIGIFSGSEFEKDKKIRVPIVFVTLKEKLENVLSEIRKFEFERYDISDVEGTPSEALSKIESELKAIESERNSLIEKLKALAQKWEKELLAVYELLSIEKARGDAYSQFGKTDRTYYIEAWVPARDAEKAKSLIENSADGFAFVEITEPDEPEEKIPVLLDNPKVIKPFEMLTEMYALPKYNEVDPTLLLVPGFLLFYGIMLTDAVYGLLLTIIGLFIWKKIGKVSEGANKLGYILTLAGISTVIMGIITGGYLGDFTYEFFGFDVTKTPLALVNPLGESYYINNNNPLFTLGSISVTNGPMAILVFSIFVGLIHLLIGLFVGFKENVKRGNMGDAFINQGVWILLILSIFVGIGLMFAGANTMIAGGIIGIFVVLAILASMYKGYKSGGVMEAILGAMDVTGFLGNVLSYARLLALCLATGGLAMAVNIMAKLVGESIPVIGIIVAIIILLVGHTFNFVMNGLGAFIHSLRLHYVEFFSQFYEGGGKKFSPFKANREYTTA.

Transmembrane regions (helical) follow at residues 389–409 (GIMLTDAVYGLLLTIIGLFIW), 422–442 (LGYILTLAGISTVIMGIITGG), 494–514 (ILVFSIFVGLIHLLIGLFVGF), 531–551 (GVWILLILSIFVGIGLMFAGA), 553–573 (TMIAGGIIGIFVVLAILASMY), 602–622 (ARLLALCLATGGLAMAVNIMA), and 624–644 (LVGESIPVIGIIVAIIILLVG).

Belongs to the V-ATPase 116 kDa subunit family. As to quaternary structure, the A-type ATPase is composed of subunits A(3), B(3), C, D, E(1 or 2), F, H(2), I and K(x).

Its subcellular location is the cell membrane. In terms of biological role, component of the A-type ATP synthase that produces ATP from ADP in the presence of a proton gradient across the membrane. This is A-type ATP synthase subunit I from Methanocaldococcus jannaschii (strain ATCC 43067 / DSM 2661 / JAL-1 / JCM 10045 / NBRC 100440) (Methanococcus jannaschii).